The chain runs to 434 residues: Cobyrinate a,c-diamide synthase (434 aa).

A GATase cobBQ-type domain is found at 240 to 430; the sequence is KAYVAYDSAF…SHFHFSRTRR (191 aa). The Nucleophile role is filled by C322.

It belongs to the CobB/CbiA family. Requires Mg(2+) as cofactor.

It carries out the reaction cob(II)yrinate + 2 L-glutamine + 2 ATP + 2 H2O = cob(II)yrinate a,c diamide + 2 L-glutamate + 2 ADP + 2 phosphate + 2 H(+). It functions in the pathway cofactor biosynthesis; adenosylcobalamin biosynthesis; cob(II)yrinate a,c-diamide from sirohydrochlorin (anaerobic route): step 10/10. In terms of biological role, catalyzes the ATP-dependent amidation of the two carboxylate groups at positions a and c of cobyrinate, using either L-glutamine or ammonia as the nitrogen source. This chain is Cobyrinate a,c-diamide synthase, found in Sulfolobus acidocaldarius (strain ATCC 33909 / DSM 639 / JCM 8929 / NBRC 15157 / NCIMB 11770).